Reading from the N-terminus, the 225-residue chain is Ribonuclease 3 (225 aa).

Residues 7 to 129 (LPRLGRILGY…IIGAIYLDAD (123 aa)) enclose the RNase III domain. Residue Glu42 participates in Mg(2+) binding. Residue Asp46 is part of the active site. Positions 115 and 118 each coordinate Mg(2+). Residue Glu118 is part of the active site. Residues 155-225 (DPKTLLQEHL…AAEVLERIKK (71 aa)) enclose the DRBM domain.

This sequence belongs to the ribonuclease III family. As to quaternary structure, homodimer. Mg(2+) is required as a cofactor.

The protein localises to the cytoplasm. The enzyme catalyses Endonucleolytic cleavage to 5'-phosphomonoester.. Functionally, digests double-stranded RNA. Involved in the processing of primary rRNA transcript to yield the immediate precursors to the large and small rRNAs (23S and 16S). Processes some mRNAs, and tRNAs when they are encoded in the rRNA operon. Processes pre-crRNA and tracrRNA of type II CRISPR loci if present in the organism. In Shewanella loihica (strain ATCC BAA-1088 / PV-4), this protein is Ribonuclease 3.